A 198-amino-acid chain; its full sequence is Protein XA-1 (198 aa).

The first 18 residues, 1–18, serve as a signal peptide directing secretion; it reads MFFYVLLLALMAQGWSLP. A disordered region spans residues 17–198; the sequence is LPQGKTGEDS…KHGQEQGKKH (182 aa). Positions 29-44 are enriched in pro residues; the sequence is FRPPSPPMGPSLPPPV. Residues 46-59 show a composition bias toward basic and acidic residues; that stretch reads HDLHRPSGHPEEFR. Over residues 76–86 the composition is skewed to basic residues; that stretch reads GRPKRDLHHGK. Basic and acidic residues predominate over residues 95 to 104; it reads HTGEVLHHTD. Basic residues predominate over residues 134-145; the sequence is HGRHRRDLHHGK. Residues 181-198 show a composition bias toward basic and acidic residues; it reads NSSEEKRPKHGQEQGKKH.

In terms of tissue distribution, expressed in the periphery of the cement gland as well as in the region of the hatching gland.

It is found in the secreted. In Xenopus laevis (African clawed frog), this protein is Protein XA-1.